The sequence spans 263 residues: Neurovirulence factor ICP34.5 (263 aa).

Basic residues predominate over residues 1–14 (MARRRRHRGPRRPR). The tract at residues 1–16 (MARRRRHRGPRRPRPP) is required for nucleolar localization. Disordered regions lie at residues 1–128 (MARR…PFRL) and 149–190 (RRAG…PATP). Positions 24–35 (TAQSQVTSTPNS) are enriched in polar residues. Pro residues predominate over residues 45 to 58 (AAPPPPPASGPPPS). Residues 73 to 83 (ASDDDDDDDWP) show a composition bias toward acidic residues. Pro residues-rich tracts occupy residues 84–93 (DSPPPEPAPE) and 119–128 (SHPPSRPFRL). A Nuclear export signal motif is present at residues 128 to 137 (LPPRLALRLR). 10 consecutive repeat copies span residues 161–163 (ATP), 164–166 (ATP), 167–169 (ATP), 170–172 (ATP), 173–175 (ATP), 176–178 (ATP), 179–181 (ATP), 182–184 (ATP), 185–187 (ATP), and 188–190 (ATP). The interval 161-190 (ATPATPATPATPATPATPATPATPATPATP) is 10 X 3 AA tandem repeats of A-T-P. Residues 164 to 190 (ATPATPATPATPATPATPATPATPATP) show a composition bias toward low complexity. An interaction with host PPP1CA region spans residues 190 to 203 (PARVRFSPHVRVRH). Residues 205–263 (VVWASAARLARRGSWARERADRARFRRRVAEAEAVIGPCLGPEARARALARGAGPANSV) are important for interferon resistance. A Bipartite nuclear localization signal motif is present at residues 215-233 (RRGSWARERADRARFRRRV). The interaction with host EIF2S1/EIF-2ALPHA stretch occupies residues 233–248 (VAEAEAVIGPCLGPEA).

It belongs to the PPP1R15 family. In terms of assembly, interacts with host PPP1CA; this interaction to forms a high-molecular-weight complex that dephosphorylates EIF2S1/eIF-2alpha. Interacts with host EIF2S1/eIF-2alpha; this interaction is crucial for the specific dephosphorylation of EIF2S1/eIF-2alpha by PPP1CA. Binds to proliferating cell nuclear antigen (PCNA), which may release host cells from growth arrest and facilitate viral replication. Interacts (via N-terminus) with host C1QBP; this interaction allows C1QBP to be recruited to the inner nuclear membrane by ICP34.5. Interacts with host PRKCA. Interacts with protein UL31. Interacts with host STING/TMEM173; this interaction inhibits the intracellular DNA sensing pathway. Interacts with host BECN1; this interaction modulates host autophagy.

The protein localises to the host cytoplasm. It is found in the host nucleus. The protein resides in the host nucleolus. Its subcellular location is the virion. Inhibits the establishment of the immune response and of the integrated stress response (ISR) in the infected cell. Plays essential roles in viral nuclear egress to mediate capsid transit across the nuclear membrane. Facilitates nuclear egress cooperatively with host C1QBP and protein kinase C/PKC to induce lamin A/C phosphorylation and subsequent reorganization. In turn, lamina disassembles and nuclear egress occurs. Recruits the serine/threonine protein phosphatase PPP1CA/PP1-alpha to dephosphorylate the translation initiation factor EIF2S1/eIF-2alpha, thereby couteracting the host shutoff of protein synthesis involving double-stranded RNA-dependent protein kinase EIF2AK2/PKR. In turn, controls host IRF3 activation and subsequently inhibits host interferon response. Controls the DNA sensing pathway by interacting with and inhibiting host STING/TMEM173. Also down-modulates the host MHC class II proteins cell surface expression. Acts as a neurovirulence factor that has a profound effect on the growth of the virus in central nervous system tissue, by interacting with host BECN1 and thereby antagonizing the host autophagy response. The chain is Neurovirulence factor ICP34.5 (RL1) from Human herpesvirus 1 (strain F) (HHV-1).